The primary structure comprises 378 residues: Queuine tRNA-ribosyltransferase (378 aa).

Asp-90 functions as the Proton acceptor in the catalytic mechanism. Substrate contacts are provided by residues 90-94 (DSGGF), Asp-144, Gln-188, and Gly-220. The RNA binding stretch occupies residues 251–257 (GVGTPED). Catalysis depends on Asp-270, which acts as the Nucleophile. The interval 275-279 (TRNAR) is RNA binding; important for wobble base 34 recognition. The Zn(2+) site is built by Cys-308, Cys-310, Cys-313, and His-339.

The protein belongs to the queuine tRNA-ribosyltransferase family. Homodimer. Within each dimer, one monomer is responsible for RNA recognition and catalysis, while the other monomer binds to the replacement base PreQ1. Zn(2+) is required as a cofactor.

The enzyme catalyses 7-aminomethyl-7-carbaguanine + guanosine(34) in tRNA = 7-aminomethyl-7-carbaguanosine(34) in tRNA + guanine. Its pathway is tRNA modification; tRNA-queuosine biosynthesis. Functionally, catalyzes the base-exchange of a guanine (G) residue with the queuine precursor 7-aminomethyl-7-deazaguanine (PreQ1) at position 34 (anticodon wobble position) in tRNAs with GU(N) anticodons (tRNA-Asp, -Asn, -His and -Tyr). Catalysis occurs through a double-displacement mechanism. The nucleophile active site attacks the C1' of nucleotide 34 to detach the guanine base from the RNA, forming a covalent enzyme-RNA intermediate. The proton acceptor active site deprotonates the incoming PreQ1, allowing a nucleophilic attack on the C1' of the ribose to form the product. After dissociation, two additional enzymatic reactions on the tRNA convert PreQ1 to queuine (Q), resulting in the hypermodified nucleoside queuosine (7-(((4,5-cis-dihydroxy-2-cyclopenten-1-yl)amino)methyl)-7-deazaguanosine). This is Queuine tRNA-ribosyltransferase from Nautilia profundicola (strain ATCC BAA-1463 / DSM 18972 / AmH).